The sequence spans 173 residues: Alpha-crystallin A chain (173 aa).

Methionine 1 carries the post-translational modification N-acetylmethionine. The region spanning 52 to 162 is the sHSP domain; the sequence is LFRTVLESGI…SHNERPIPVS (111 aa). The Zn(2+) site is built by histidine 100, glutamate 102, histidine 107, and histidine 154. The tract at residues 144–173 is disordered; that stretch reads PKVQSNTDPSHNERPIPVSREEKPTSAPPS. The segment covering 153-167 has biased composition (basic and acidic residues); the sequence is SHNERPIPVSREEKP. Serine 162 is a glycosylation site (O-linked (GlcNAc) serine).

The protein belongs to the small heat shock protein (HSP20) family. In terms of assembly, heteropolymer composed of three CRYAA and one CRYAB subunits. Inter-subunit bridging via zinc ions enhances stability, which is crucial as there is no protein turn over in the lens. Can also form homodimers and homotetramers (dimers of dimers) which serve as the building blocks of homooligomers. Within homooligomers, the zinc-binding motif is created from residues of 3 different molecules. His-100 and Glu-102 from one molecule are ligands of the zinc ion, and His-107 and His-154 residues from additional molecules complete the site with tetrahedral coordination geometry.

Its subcellular location is the cytoplasm. The protein resides in the nucleus. In terms of biological role, contributes to the transparency and refractive index of the lens. May act as a chaperone, preventing aggregation of various proteins under a wide range of stress conditions. The sequence is that of Alpha-crystallin A chain (CRYAA) from Tupinambis teguixin (Golden tegu).